A 250-amino-acid polypeptide reads, in one-letter code: DNA repair protein RecO (250 aa).

The protein belongs to the RecO family.

In terms of biological role, involved in DNA repair and RecF pathway recombination. This Staphylococcus aureus (strain MW2) protein is DNA repair protein RecO.